Consider the following 94-residue polypeptide: uncharacterized protein (94 aa).

This is an uncharacterized protein from Helicobacter pylori (strain ATCC 700392 / 26695) (Campylobacter pylori).